The sequence spans 804 residues: Endoplasmin (804 aa).

The N-terminal stretch at 1-21 (MRVLWVLGLCCVLLTFGFVRA) is a signal peptide. The SRT pseudosubstrate motif signature appears at 42-44 (SRT). A glycan (N-linked (GlcNAc...) asparagine) is linked at N62. Position 64 is a phosphoserine (S64). N-linked (GlcNAc...) asparagine glycosylation is present at N107. Positions 107, 149, and 162 each coordinate ATP. K168 is subject to N6-(2-hydroxyisobutyryl)lysine. S172 is subject to Phosphoserine. F199 contacts ATP. N-linked (GlcNAc...) asparagine glycosylation is present at N217. The segment at 288 to 323 (TVEEPLEEDETAQEEKEEADDEAAVEEEEEEKKPKT) is disordered. A compositionally biased stretch (acidic residues) spans 289 to 317 (VEEPLEEDETAQEEKEEADDEAAVEEEEE). S403 carries the phosphoserine modification. An N6-succinyllysine modification is found at K404. The N-linked (GlcNAc...) asparagine glycan is linked to N445. S447 is modified (phosphoserine). N6-acetyllysine is present on K479. N481 and N502 each carry an N-linked (GlcNAc...) asparagine glycan. An N6-succinyllysine modification is found at K633. The disordered stretch occupies residues 749–804 (IDPEAQVEEEPEEEPEDTTEDTTDDSEQDEEETDAGAEEEEEEQETEKEPTEKDEL). Residues 753 to 794 (AQVEEEPEEEPEDTTEDTTDDSEQDEEETDAGAEEEEEEQET) are compositionally biased toward acidic residues. The segment covering 795–804 (EKEPTEKDEL) has biased composition (basic and acidic residues). The Prevents secretion from ER motif lies at 801–804 (KDEL).

Belongs to the heat shock protein 90 family. Homodimer; disulfide-linked. Component of an EIF2 complex at least composed of CELF1/CUGBP1, CALR, CALR3, EIF2S1, EIF2S2, HSP90B1 and HSPA5. Part of a large chaperone multiprotein complex comprising DNAJB11, HSP90B1, HSPA5, HYOU, PDIA2, PDIA4, PDIA6, PPIB, SDF2L1, UGGT1 and very small amounts of ERP29, but not, or at very low levels, CALR nor CANX. Interacts with AIMP1; regulates its retention in the endoplasmic reticulum. Hyperglycosylated form interacts with OS9; promoting its degradation by the endoplasmic reticulum associated degradation (ERAD). Interacts with CNPY3. This interaction is disrupted in the presence of ATP. Interacts with TLR4 and TLR9, but not with TLR3. Interacts with MZB1 in a calcium-dependent manner. Interacts with METTL23. Interacts with IL1B; the interaction facilitates cargo translocation into the ERGIC. Interacts with EIF2AK3. In terms of processing, phosphorylated by CK2. Post-translationally, N-glycosylated cotranslationally at Asn-217 by STT3A-containing OST-A complex: this glycosylation is constitutive. In response to various stress, 5 additional facultative sites (Asn-62, Asn-107, Asn-445, Asn-481 and Asn-502) can be glycosylated post-translationally by STT3B-containing OST-B complex, leading to a hyperglycosylated form that is degraded by the ER-associated degradation (ERAD) pathway. In normal conditions, the OST-A complex together with CCDC134 prevent glycosylation at facultative sites during protein folding, thereby preventing hyperglycosylation. Mechanistically, nascent HSP90B1 is tethered during translation to a specialized CCDC134-containing translocon that forms a microenvironment for its folding, in which STT3A associates with the SRT pseudosubstrate motif, and prevents access to facultative glycosylation sites until folding is completed, rendering its facultative sites inaccessible to the OST-B complex.

It localises to the endoplasmic reticulum lumen. The protein localises to the sarcoplasmic reticulum lumen. It is found in the melanosome. The enzyme catalyses ATP + H2O = ADP + phosphate + H(+). Functionally, ATP-dependent chaperone involved in the processing of proteins in the endoplasmic reticulum, regulating their transport. Together with MESD, acts as a modulator of the Wnt pathway by promoting the folding of LRP6, a coreceptor of the canonical Wnt pathway. When associated with CNPY3, required for proper folding of Toll-like receptors. Promotes folding and trafficking of TLR4 to the cell surface. May participate in the unfolding of cytosolic leaderless cargos (lacking the secretion signal sequence) such as the interleukin 1/IL-1 to facilitate their translocation into the ERGIC (endoplasmic reticulum-Golgi intermediate compartment) and secretion; the translocation process is mediated by the cargo receptor TMED10. The protein is Endoplasmin of Rattus norvegicus (Rat).